Here is a 213-residue protein sequence, read N- to C-terminus: Ribonuclease HII (213 aa).

Residues 1–206 (MICGVDEAGK…VSTLLAKKTQ (206 aa)) form the RNase H type-2 domain. Residues Asp-6, Glu-7, and Asp-101 each contribute to the a divalent metal cation site.

Belongs to the RNase HII family. It depends on Mn(2+) as a cofactor. Mg(2+) is required as a cofactor.

It localises to the cytoplasm. It carries out the reaction Endonucleolytic cleavage to 5'-phosphomonoester.. Its function is as follows. Endonuclease that specifically degrades the RNA of RNA-DNA hybrids. This is Ribonuclease HII from Methanoregula boonei (strain DSM 21154 / JCM 14090 / 6A8).